The chain runs to 111 residues: Probable 4-amino-4-deoxy-L-arabinose-phosphoundecaprenol flippase subunit ArnE (111 aa).

Helical transmembrane passes span 38 to 58 (LWLGLALICMGAAMVLWLLVL), 61 to 81 (LPVGIAYPMLSLNFVWVTLAA), and 91 to 111 (PRHWFGVALIISGIIILGSAA). Residues 40–109 (LGLALICMGA…IISGIIILGS (70 aa)) enclose the EamA domain.

It belongs to the ArnE family. As to quaternary structure, heterodimer of ArnE and ArnF.

Its subcellular location is the cell inner membrane. The protein operates within bacterial outer membrane biogenesis; lipopolysaccharide biosynthesis. Its function is as follows. Translocates 4-amino-4-deoxy-L-arabinose-phosphoundecaprenol (alpha-L-Ara4N-phosphoundecaprenol) from the cytoplasmic to the periplasmic side of the inner membrane. This Salmonella enteritidis PT4 (strain P125109) protein is Probable 4-amino-4-deoxy-L-arabinose-phosphoundecaprenol flippase subunit ArnE.